A 117-amino-acid chain; its full sequence is Big defensin (117 aa).

A signal peptide spans 1-23 (MEKKTAYCLLFLVLLVPYTALGA). Residues 24 to 33 (VLKRAPAKKE) constitute a propeptide that is removed on maturation. 3 disulfide bridges follow: cysteine 82/cysteine 112, cysteine 89/cysteine 107, and cysteine 93/cysteine 113.

Belongs to the big defensin family.

It localises to the secreted. Its function is as follows. Significantly inhibits the growth of Gram-negative and Gram-positive bacteria and fungi in vitro. The polypeptide is Big defensin (Branchiostoma belcheri (Amphioxus)).